The sequence spans 441 residues: MIKKKLETKLKNFGNQFSELKQRMYFVIFSLIVFRMGSYIPIPGIDTVALASLLEHHRGTIIEMFNMFSGGALSRASIFALGIMPFISSSIIVQILTLIHPKFIEMKKDGEQGRHRINKYIRYITLILAALQSFGMSISLPNIPGLKDVIIDPSISFYGIAIISLITGTIFLMWLGELITEKGIGNGISIIIFSGIVSGLPSSFLNTVEKVRQGSLHVLLFCFIGIVIFLVTLLVVYIERSQRKITISYAKRNLGHRTYSMNSTHLPLKLNMSGVIPAIFASSIVLFPATIASWFGNRDHFKWLVDIVFYLQPTKPLYILTYITAIIFFCFFYTGLAFNPRETADNLKKSGAFILGIRPGEKTAQYINKIMLRLTFLGSMYMAFICLVPELMRFFMDVPFYFGGTSLLIIVVVIIDFISQVQTYIMSTQYESVLKKNKFRF.

The next 10 membrane-spanning stretches (helical) occupy residues 25–45 (YFVIFSLIVFRMGSYIPIPGI), 78–98 (IFALGIMPFISSSIIVQILTL), 126–146 (LILAALQSFGMSISLPNIPGL), 155–175 (ISFYGIAIISLITGTIFLMWL), 184–204 (IGNGISIIIFSGIVSGLPSSF), 218–238 (VLLFCFIGIVIFLVTLLVVYI), 275–295 (VIPAIFASSIVLFPATIASWF), 318–338 (YILTYITAIIFFCFFYTGLAF), 376–396 (FLGSMYMAFICLVPELMRFFM), and 398–418 (VPFYFGGTSLLIIVVVIIDFI).

This sequence belongs to the SecY/SEC61-alpha family. Component of the Sec protein translocase complex. Heterotrimer consisting of SecY, SecE and SecG subunits. The heterotrimers can form oligomers, although 1 heterotrimer is thought to be able to translocate proteins. Interacts with the ribosome. Interacts with SecDF, and other proteins may be involved. Interacts with SecA.

Its subcellular location is the cell membrane. Functionally, the central subunit of the protein translocation channel SecYEG. Consists of two halves formed by TMs 1-5 and 6-10. These two domains form a lateral gate at the front which open onto the bilayer between TMs 2 and 7, and are clamped together by SecE at the back. The channel is closed by both a pore ring composed of hydrophobic SecY resides and a short helix (helix 2A) on the extracellular side of the membrane which forms a plug. The plug probably moves laterally to allow the channel to open. The ring and the pore may move independently. The chain is Protein translocase subunit SecY from Buchnera aphidicola subsp. Baizongia pistaciae (strain Bp).